Here is a 186-residue protein sequence, read N- to C-terminus: Large ribosomal subunit protein uL5 (186 aa).

It belongs to the universal ribosomal protein uL5 family. As to quaternary structure, part of the 50S ribosomal subunit; contacts the 5S rRNA and probably tRNA. Forms a bridge to the 30S subunit in the 70S ribosome.

In terms of biological role, this is one of the proteins that bind and probably mediate the attachment of the 5S RNA into the large ribosomal subunit, where it forms part of the central protuberance. In the 70S ribosome it contacts protein S13 of the 30S subunit (bridge B1b), connecting the 2 subunits; this bridge is implicated in subunit movement. May contact the P site tRNA; the 5S rRNA and some of its associated proteins might help stabilize positioning of ribosome-bound tRNAs. This Pyrococcus furiosus (strain ATCC 43587 / DSM 3638 / JCM 8422 / Vc1) protein is Large ribosomal subunit protein uL5.